The chain runs to 84 residues: Small ribosomal subunit protein uS17 (84 aa).

The protein belongs to the universal ribosomal protein uS17 family. In terms of assembly, part of the 30S ribosomal subunit.

One of the primary rRNA binding proteins, it binds specifically to the 5'-end of 16S ribosomal RNA. In Porphyromonas gingivalis (strain ATCC 33277 / DSM 20709 / CIP 103683 / JCM 12257 / NCTC 11834 / 2561), this protein is Small ribosomal subunit protein uS17.